The following is a 556-amino-acid chain: (-)-alpha-pinene synthase (556 aa).

D309, D313, D453, and E461 together coordinate Mg(2+). Positions 309-313 (DDMYD) match the DDXXD motif motif.

This sequence belongs to the terpene synthase family. Tpsa subfamily. It depends on Mg(2+) as a cofactor. The cofactor is Mn(2+). As to expression, expressed in ripe fruits and roots. Not detected in vegetative tissues.

It is found in the cytoplasm. The protein resides in the cytosol. It catalyses the reaction (2E)-geranyl diphosphate = (1S,5S)-alpha-pinene + diphosphate. The protein operates within secondary metabolite biosynthesis; terpenoid biosynthesis. Monoterpene synthase catalyzing the production of (-)-alpha-pinene, beta-phellandrene and beta-myrcene as the major products. Unable to use farnesyl diphosphate as substrate. Exclusively expressed in the fruit of wild strawberries. Not detected in cultivated varieties. The protein is (-)-alpha-pinene synthase of Fragaria vesca (Woodland strawberry).